A 218-amino-acid polypeptide reads, in one-letter code: Phosphoglycolate phosphatase (218 aa).

The Nucleophile role is filled by Asp7. Asp7, Asp9, and Asp167 together coordinate Mg(2+).

This sequence belongs to the HAD-like hydrolase superfamily. CbbY/CbbZ/Gph/YieH family. Mg(2+) serves as cofactor.

It carries out the reaction 2-phosphoglycolate + H2O = glycolate + phosphate. The protein operates within organic acid metabolism; glycolate biosynthesis; glycolate from 2-phosphoglycolate: step 1/1. Functionally, specifically catalyzes the dephosphorylation of 2-phosphoglycolate. Is involved in the dissimilation of the intracellular 2-phosphoglycolate formed during the DNA repair of 3'-phosphoglycolate ends, a major class of DNA lesions induced by oxidative stress. The chain is Phosphoglycolate phosphatase from Cereibacter sphaeroides (strain ATCC 17029 / ATH 2.4.9) (Rhodobacter sphaeroides).